The primary structure comprises 466 residues: tRNA-2-methylthio-N(6)-dimethylallyladenosine synthase (466 aa).

An MTTase N-terminal domain is found at 2 to 118 (KRFYIHTIGC…LPGHIQAVAH (117 aa)). [4Fe-4S] cluster-binding residues include C11, C47, C81, C157, C161, and C164. The 230-residue stretch at 143–372 (DSSGVTGFIT…LELQNRITAE (230 aa)) folds into the Radical SAM core domain. Residues 375–453 (RALEGRVEQV…AHSLSGIAVG (79 aa)) form the TRAM domain.

The protein belongs to the methylthiotransferase family. MiaB subfamily. Monomer. [4Fe-4S] cluster serves as cofactor.

The protein localises to the cytoplasm. It carries out the reaction N(6)-dimethylallyladenosine(37) in tRNA + (sulfur carrier)-SH + AH2 + 2 S-adenosyl-L-methionine = 2-methylsulfanyl-N(6)-dimethylallyladenosine(37) in tRNA + (sulfur carrier)-H + 5'-deoxyadenosine + L-methionine + A + S-adenosyl-L-homocysteine + 2 H(+). Functionally, catalyzes the methylthiolation of N6-(dimethylallyl)adenosine (i(6)A), leading to the formation of 2-methylthio-N6-(dimethylallyl)adenosine (ms(2)i(6)A) at position 37 in tRNAs that read codons beginning with uridine. The polypeptide is tRNA-2-methylthio-N(6)-dimethylallyladenosine synthase (Desulfosudis oleivorans (strain DSM 6200 / JCM 39069 / Hxd3) (Desulfococcus oleovorans)).